A 478-amino-acid polypeptide reads, in one-letter code: Pentraxin-4 (478 aa).

The signal sequence occupies residues 1–25; sequence MGCSWRKTLSFFLVFVPIYLHGASS. 2 N-linked (GlcNAc...) asparagine glycosylation sites follow: N67 and N91. The segment covering 208–222 has biased composition (basic and acidic residues); that stretch reads RDRQELRAASEHRGP. The tract at residues 208-262 is disordered; the sequence is RDRQELRAASEHRGPPQDSSAPLQGRREPPASGSHRVLSGTAPKDPRQQAWSPQV. The region spanning 269 to 473 is the Pentraxin (PTX) domain; sequence VGPTLVFPNA…GFVQGANCTC (205 aa). Cysteines 300 and 364 form a disulfide. Residues D322, N323, E406, Q407, and D408 each contribute to the Ca(2+) site.

Ca(2+) serves as cofactor. Widely expressed at low levels with highest levels in small intestine, testis and brain. Very low expression in endothelial cells, monocytes, neutrophils and lymphocytes. Isoform 1 is not expressed in small intestine.

Its subcellular location is the secreted. This chain is Pentraxin-4 (PTX4), found in Homo sapiens (Human).